The sequence spans 1331 residues: Xanthine dehydrogenase/oxidase (1331 aa).

The 2Fe-2S ferredoxin-type domain maps to 4 to 91 (DELVFFVNGK…HVAVTTVEGI (88 aa)). [2Fe-2S] cluster is bound by residues Cys-43, Cys-48, Cys-51, Cys-73, Cys-112, Cys-115, Cys-147, and Cys-149. Residues 228–413 (FEGERVTWIQ…LSIEIPYSKE (186 aa)) enclose the FAD-binding PCMH-type domain. FAD is bound by residues 256–263 (LVVGNTEI), Phe-336, 346–350 (SIGGN), Asp-359, Leu-403, and Lys-421. Cys-535 and Cys-992 are disulfide-bonded. Mo-molybdopterin contacts are provided by Gln-767 and Phe-798. Glu-802 and Arg-880 together coordinate substrate. Residue Arg-912 coordinates Mo-molybdopterin. Substrate-binding residues include Phe-914 and Thr-1010. Ala-1079 contributes to the Mo-molybdopterin binding site. The active-site Proton acceptor is the Glu-1261.

It belongs to the xanthine dehydrogenase family. Homodimer. Interacts with BTN1A1. [2Fe-2S] cluster serves as cofactor. Requires FAD as cofactor. It depends on Mo-molybdopterin as a cofactor. Subject to partial proteolysis; this alters the enzyme from the dehydrogenase form (D) to the oxidase form (O). Post-translationally, contains sulfhydryl groups that are easily oxidized (in vitro); this alters the enzyme from the dehydrogenase form (D) to the oxidase form (O).

The protein resides in the peroxisome. The protein localises to the cytoplasm. It localises to the secreted. The catalysed reaction is xanthine + NAD(+) + H2O = urate + NADH + H(+). It carries out the reaction hypoxanthine + NAD(+) + H2O = xanthine + NADH + H(+). The enzyme catalyses xanthine + O2 + H2O = urate + H2O2. Can be converted from the dehydrogenase form (D) to the oxidase form (O) irreversibly by proteolysis or reversibly through the oxidation of sulfhydryl groups. Functionally, key enzyme in purine degradation. Catalyzes the oxidation of hypoxanthine to xanthine. Catalyzes the oxidation of xanthine to uric acid. Contributes to the generation of reactive oxygen species. The polypeptide is Xanthine dehydrogenase/oxidase (Xdh) (Rattus norvegicus (Rat)).